Reading from the N-terminus, the 532-residue chain is Probable 1,4-beta-D-glucan cellobiohydrolase B (532 aa).

The first 26 residues, 1–26, serve as a signal peptide directing secretion; that stretch reads MLASTFSYRMYKTALILAALLGSGQA. Residues 27–461 are catalytic; that stretch reads QQVGTSQAEV…SNIKVGPIGS (435 aa). Glu238 serves as the catalytic Nucleophile. The Proton donor role is filled by Glu243. Asn296 carries an N-linked (GlcNAc...) asparagine glycan. A disordered region spans residues 462-495; the sequence is TFNSGGSNPGGGTTTTTTTQPTTTTTTAGNPGGT. The interval 462–496 is thr-rich linker; the sequence is TFNSGGSNPGGGTTTTTTTQPTTTTTTAGNPGGTG. The span at 475–490 shows a compositional bias: low complexity; it reads TTTTTTQPTTTTTTAG. The CBM1 domain occupies 496-532; the sequence is GVAQHYGQCGGIGWTGPTTCASPYTCQKLNDYYSQCL. Disulfide bonds link Cys504–Cys521 and Cys515–Cys531.

Belongs to the glycosyl hydrolase 7 (cellulase C) family.

It localises to the secreted. The catalysed reaction is Hydrolysis of (1-&gt;4)-beta-D-glucosidic linkages in cellulose and cellotetraose, releasing cellobiose from the non-reducing ends of the chains.. The biological conversion of cellulose to glucose generally requires three types of hydrolytic enzymes: (1) Endoglucanases which cut internal beta-1,4-glucosidic bonds; (2) Exocellobiohydrolases that cut the disaccharide cellobiose from the non-reducing end of the cellulose polymer chain; (3) Beta-1,4-glucosidases which hydrolyze the cellobiose and other short cello-oligosaccharides to glucose. The polypeptide is Probable 1,4-beta-D-glucan cellobiohydrolase B (cbhB) (Aspergillus fumigatus (strain CBS 144.89 / FGSC A1163 / CEA10) (Neosartorya fumigata)).